A 523-amino-acid polypeptide reads, in one-letter code: 2-isopropylmalate synthase (523 aa).

The Pyruvate carboxyltransferase domain maps to 5 to 267 (VIIFDTTLRD…HTNINHHEIW (263 aa)). The Mn(2+) site is built by Asp14, His202, His204, and Asn238. Positions 392–523 (RLDYFNVQSG…QNKENNKETV (132 aa)) are regulatory domain.

Belongs to the alpha-IPM synthase/homocitrate synthase family. LeuA type 1 subfamily. In terms of assembly, homodimer. Mn(2+) serves as cofactor.

The protein resides in the cytoplasm. It catalyses the reaction 3-methyl-2-oxobutanoate + acetyl-CoA + H2O = (2S)-2-isopropylmalate + CoA + H(+). It functions in the pathway amino-acid biosynthesis; L-leucine biosynthesis; L-leucine from 3-methyl-2-oxobutanoate: step 1/4. In terms of biological role, catalyzes the condensation of the acetyl group of acetyl-CoA with 3-methyl-2-oxobutanoate (2-ketoisovalerate) to form 3-carboxy-3-hydroxy-4-methylpentanoate (2-isopropylmalate). The protein is 2-isopropylmalate synthase of Klebsiella pneumoniae subsp. pneumoniae (strain ATCC 700721 / MGH 78578).